A 485-amino-acid polypeptide reads, in one-letter code: MTSDIHLSLAQIHNLLISREKSVEEVTQACLDRIIATEPTINAFITICAEEALSEAKKLDQSTPDPKKPLWGIPIAVKDNILTKNIPTTAASCMLKHFIPQYDAFIIQQLKNAGAIIIGKTNLDEFAMGSSTETSFFGPTYNPWNTKCVPGGSSGGSAASVAAFQCFSAIGTDTGGSIRQPAALCGCIGLKPTYGRVSRYGIIAYASSLDQAGPITRTVEDAAIMLSVLAKHDPQDTTSSFKATDNYYINLKKQDLTGITIGIPKEFISEHIDPPILDIYQQAIEQAKELGAKTIDLSLPHATDHAIATYYIIATAEASSNLARFDGVRYGYRAKNSHTLEELYINSRTKGFGEEVKRRILLGTHVLSTDYYENYYHKAAQVRYLILQDFLSVFKKCDILLTPVSPITAWEIGSTIKKPITIYHKDIFTVSLNLAGLPGLSIPAGLVKGLPVGIQLIGQAFDESTLLSIGNILHKYLGPTSQPNL.

Active-site charge relay system residues include Lys78 and Ser153. Ser177 functions as the Acyl-ester intermediate in the catalytic mechanism.

This sequence belongs to the amidase family. GatA subfamily. As to quaternary structure, heterotrimer of A, B and C subunits.

It carries out the reaction L-glutamyl-tRNA(Gln) + L-glutamine + ATP + H2O = L-glutaminyl-tRNA(Gln) + L-glutamate + ADP + phosphate + H(+). Its function is as follows. Allows the formation of correctly charged Gln-tRNA(Gln) through the transamidation of misacylated Glu-tRNA(Gln) in organisms which lack glutaminyl-tRNA synthetase. The reaction takes place in the presence of glutamine and ATP through an activated gamma-phospho-Glu-tRNA(Gln). The sequence is that of Glutamyl-tRNA(Gln) amidotransferase subunit A from Lawsonia intracellularis (strain PHE/MN1-00).